The primary structure comprises 187 residues: ATP synthase subunit b (187 aa).

Residues 4–24 (LALFALLMVPAILLASGHDSG) traverse the membrane as a helical segment.

It belongs to the ATPase B chain family. As to quaternary structure, F-type ATPases have 2 components, F(1) - the catalytic core - and F(0) - the membrane proton channel. F(1) has five subunits: alpha(3), beta(3), gamma(1), delta(1), epsilon(1). F(0) has three main subunits: a(1), b(2) and c(10-14). The alpha and beta chains form an alternating ring which encloses part of the gamma chain. F(1) is attached to F(0) by a central stalk formed by the gamma and epsilon chains, while a peripheral stalk is formed by the delta and b chains.

It localises to the cell inner membrane. Functionally, f(1)F(0) ATP synthase produces ATP from ADP in the presence of a proton or sodium gradient. F-type ATPases consist of two structural domains, F(1) containing the extramembraneous catalytic core and F(0) containing the membrane proton channel, linked together by a central stalk and a peripheral stalk. During catalysis, ATP synthesis in the catalytic domain of F(1) is coupled via a rotary mechanism of the central stalk subunits to proton translocation. Component of the F(0) channel, it forms part of the peripheral stalk, linking F(1) to F(0). This Sulfurovum sp. (strain NBC37-1) protein is ATP synthase subunit b.